The primary structure comprises 150 residues: MSFRVGVLRVLLGVFFALTGAAKLFQVSAPVSQQMRALFEQFAEVFPLKVFGYQPDPISYQTAVGWLELLAGLLLVVGPPVLQEISNVLLILLMMGAVFTLVVLKEPLSTYVPAAVCLGLLLLLDSCHFLARTKGAVRCPSKKIPPAHGN.

The first 21 residues, 1–21 (MSFRVGVLRVLLGVFFALTGA), serve as a signal peptide directing secretion. The next 3 helical transmembrane spans lie at 62-82 (TAVG…PPVL), 84-104 (EISN…LVVL), and 111-131 (YVPA…HFLA).

Belongs to the DoxX family.

Its subcellular location is the membrane. The polypeptide is Transmembrane protein 35B (Mus musculus (Mouse)).